We begin with the raw amino-acid sequence, 1066 residues long: Isoleucine--tRNA ligase (1066 aa).

A 'HIGH' region motif is present at residues 49 to 59 (PYVSGAIHLGT). The 'KMSKS' region motif lies at 625-629 (KMSKS). Lysine 628 serves as a coordination point for ATP.

Belongs to the class-I aminoacyl-tRNA synthetase family. IleS type 2 subfamily. In terms of assembly, monomer. Zn(2+) is required as a cofactor.

It is found in the cytoplasm. It carries out the reaction tRNA(Ile) + L-isoleucine + ATP = L-isoleucyl-tRNA(Ile) + AMP + diphosphate. Functionally, catalyzes the attachment of isoleucine to tRNA(Ile). As IleRS can inadvertently accommodate and process structurally similar amino acids such as valine, to avoid such errors it has two additional distinct tRNA(Ile)-dependent editing activities. One activity is designated as 'pretransfer' editing and involves the hydrolysis of activated Val-AMP. The other activity is designated 'posttransfer' editing and involves deacylation of mischarged Val-tRNA(Ile). The chain is Isoleucine--tRNA ligase from Pyrococcus furiosus (strain ATCC 43587 / DSM 3638 / JCM 8422 / Vc1).